Consider the following 334-residue polypeptide: G-protein coupled receptor 12 (334 aa).

At 1-48 the chain is on the extracellular side; it reads MNEDPKVNLSGLPRDCIDAGAPENISAAVPSQGSVAESEPELVVNPWD. N-linked (GlcNAc...) asparagine glycans are attached at residues Asn-8 and Asn-24. Residues 49-69 form a helical membrane-spanning segment; sequence IVLCSSGTLICCENAVVVLII. At 70-78 the chain is on the cytoplasmic side; it reads FHSPSLRAP. The helical transmembrane segment at 79-99 threads the bilayer; the sequence is MFLLIGSLALADLLAGLGLII. Residues 100 to 113 lie on the Extracellular side of the membrane; that stretch reads NFVFAYLLQSEATK. A helical membrane pass occupies residues 114 to 134; the sequence is LVTIGLIVASFSASVCSLLAI. Residues 135-158 lie on the Cytoplasmic side of the membrane; that stretch reads TVDRYLSLYYALTYHSERTVTFTY. Residues 159–179 form a helical membrane-spanning segment; that stretch reads VMLVMLWGTSICLGLLPVMGW. Residues 180–199 are Extracellular-facing; the sequence is NCLRDESTCSVVRPLTKNNA. A helical membrane pass occupies residues 200–220; sequence AILSISFLFMFALMLQLYIQI. Topologically, residues 221–252 are cytoplasmic; that stretch reads CKIVMRHAHQIALQHHFLATSHYVTTRKGVST. Residues 253 to 273 form a helical membrane-spanning segment; it reads LALILGTFAACWMPFTLYSLI. The Extracellular portion of the chain corresponds to 274–282; sequence ADYTYPSIY. Residues 283–303 form a helical membrane-spanning segment; the sequence is TYATLLPATYNSIINPVIYAF. The Cytoplasmic segment spans residues 304–334; that stretch reads RNQEIQKALCLICCGCIPSSLSQRARSPSDV. Cys-317 carries the S-palmitoyl cysteine lipid modification. Ser-330 and Ser-332 each carry phosphoserine.

The protein belongs to the G-protein coupled receptor 1 family. In terms of tissue distribution, expressed predominantly in the forebrain and a lesser extent in the hindbrain. Lower expression in the liver.

It is found in the cell membrane. Functionally, receptor with constitutive G(s) signaling activity that stimulates cyclic AMP production. Promotes neurite outgrowth and blocks myelin inhibition in neurons. This is G-protein coupled receptor 12 (Gpr12) from Mus musculus (Mouse).